We begin with the raw amino-acid sequence, 1984 residues long: Sodium channel protein type 9 subunit alpha (1984 aa).

Topologically, residues 1–125 (MAMLPPPGPQ…RRISIKILVH (125 aa)) are cytoplasmic. A compositionally biased stretch (basic and acidic residues) spans 26-39 (RISEEKAKEHKDEK). The interval 26–55 (RISEEKAKEHKDEKKDDEEEGPKPSSDLEA) is disordered. The stretch at 112-410 (FSPLRRISIK…VAMAYEEQNQ (299 aa)) is one I repeat. Residues 126 to 145 (SLFSMLIMCTILTNCIFMTL) traverse the membrane as a helical segment. Residues 146–150 (SNPPE) lie on the Extracellular side of the membrane. A helical transmembrane segment spans residues 151–172 (WTKNVEYTFTGIYTFESLIKIL). Residues 173 to 185 (ARGFCVGEFTFLR) are Cytoplasmic-facing. A helical membrane pass occupies residues 186-204 (DPWNWLDFVVIVFAYLTEF). At 205 to 210 (VNLGNV) the chain is on the extracellular side. N-linked (GlcNAc...) asparagine glycosylation is present at Asn-209. The chain crosses the membrane as a helical span at residues 211-227 (SALRTFRVLRALKTISV). Over 228–241 (IPGLKTIVGALIQS) the chain is Cytoplasmic. The helical transmembrane segment at 242–267 (VKKLSDVMILTVFCLSVFALIGLQLF) threads the bilayer. At 268 to 346 (MGNLKHKCFR…PDYGYTSFDT (79 aa)) the chain is on the extracellular side. A disulfide bridge connects residues Cys-275 and Cys-324. Asn-283 carries N-linked (GlcNAc...) asparagine glycosylation. Positions 347 to 363 (FSWAFLALFRLMTQDYW) form an intramembrane region, pore-forming. Over 364–376 (ENLYQQTLRAAGK) the chain is Extracellular. A helical membrane pass occupies residues 377-402 (TYMIFFVVVIFLGSFYLINLILAVVA). At 403-744 (MAYEEQNQAN…LIYFIVMDPF (342 aa)) the chain is on the cytoplasmic side. Residues 461–471 (SSSETSRLSSK) are compositionally biased toward low complexity. 2 disordered regions span residues 461–542 (SSSE…RGSL) and 576–609 (IFGDNESRRGSLFVPHRPRERRSSNISQASRSPP). Residues 474–486 (KERRNRRKKKKQK) show a composition bias toward basic residues. Positions 489 to 509 (SGEEKGDDEKLSKSGSEESIR) are enriched in basic and acidic residues. The stretch at 725-988 (CSPYWIKFKK…EEDTDANNLQ (264 aa)) is one II repeat. A helical membrane pass occupies residues 745–761 (VDLAITICIVLNTLFMA). The Extracellular portion of the chain corresponds to 762-770 (MEHHPMTEE). The chain crosses the membrane as a helical span at residues 771–795 (FKNVLAVGNLIFTGIFAAEMVLKLI). Residues 796 to 804 (AMDPYEYFQ) are Cytoplasmic-facing. Residues 805 to 821 (VGWNIFDSLIVTLSLIE) form a helical membrane-spanning segment. Residues 822–830 (LFLADVEGL) are Extracellular-facing. Residues 831-847 (SVLRSFRLLRVFKLAKS) form a helical membrane-spanning segment. At 848 to 864 (WPTLNMLIKIIGNSVGA) the chain is on the cytoplasmic side. The chain crosses the membrane as a helical span at residues 865-887 (LGNLTLVLAIIVFIFAVVGMQLF). The Extracellular portion of the chain corresponds to 888 to 914 (GKSYKECVCKINVDCKLPRWHMNDFFH). Cys-896 and Cys-902 are joined by a disulfide. Positions 915–927 (SFLIVFRVLCGEW) form an intramembrane region, pore-forming. The Extracellular portion of the chain corresponds to 928–939 (IETMWDCMEVAG). Cys-934 and Cys-943 are oxidised to a cystine. A helical membrane pass occupies residues 940–966 (QTMCLIVYMMVMVIGNLVVLNLFLALL). Residues 967-1185 (LSSFSSDNLT…WWTIRKTCYR (219 aa)) are Cytoplasmic-facing. 2 disordered regions span residues 1015–1040 (KKPKGSKDTKRTADPNNKKENYISNR) and 1103–1145 (EELS…EPVN). Residues 1019–1035 (GSKDTKRTADPNNKKEN) are compositionally biased toward basic and acidic residues. A compositionally biased stretch (acidic residues) spans 1135–1145 (GEEEAEAEPVN). The III repeat unit spans residues 1178 to 1486 (TIRKTCYRIV…KKYYNAMKKL (309 aa)). Residues 1186–1210 (IVEHSWFESFIVLMILLSSGALAFE) traverse the membrane as a helical segment. The Extracellular segment spans residues 1211–1222 (DIYIEKKKTIKI). A helical transmembrane segment spans residues 1223–1248 (ILEYADKIFTYIFILEMLLKWVAYGY). The Cytoplasmic portion of the chain corresponds to 1249–1250 (KT). A helical membrane pass occupies residues 1251-1276 (YFTNAWCWLDFLIVDVSLVTLVANTL). At 1277 to 1285 (GYSDLGPIK) the chain is on the extracellular side. Residues 1286 to 1302 (SLRTLRALRPLRALSRF) traverse the membrane as a helical segment. Topologically, residues 1303–1315 (EGMRVVVNALIGA) are cytoplasmic. A helical transmembrane segment spans residues 1316–1340 (IPSIMNVLLVCLIFWLIFSIMGVNL). Over 1341–1392 (FAGKFYECVNTTDGSRFPTSQVANRSECFALMNVSGNVRWKNLKVNFDNVGL) the chain is Extracellular. A disulfide bond links Cys-1348 and Cys-1368. 3 N-linked (GlcNAc...) asparagine glycosylation sites follow: Asn-1350, Asn-1364, and Asn-1373. The segment at residues 1393-1403 (GYLSLLQVATF) is an intramembrane region (pore-forming). Topologically, residues 1404–1429 (KGWMDIMYAAVDSVNVNEQPKYEYSL) are extracellular. The helical transmembrane segment at 1430–1455 (YMYIYFVIFIIFGSFFTLNLFIGVII) threads the bilayer. At 1456–1512 (DNFNQQKKKLGGQDIFMTEEQKKYYNAMKKLGSKKPQKPIPRPGNKFQGCIFDLVTN) the chain is on the cytoplasmic side. A Phosphoserine; by PKC modification is found at Ser-1488. An IV repeat occupies 1495–1793 (IPRPGNKFQG…WEKFDPDATQ (299 aa)). Residues 1513–1532 (QAFDITIMVLICLNMVTMMV) form a helical membrane-spanning segment. At 1533–1543 (EKEGQTEYMDY) the chain is on the extracellular side. A helical transmembrane segment spans residues 1544-1565 (VLHWINMVFIILFTGECVLKLI). The Cytoplasmic segment spans residues 1566-1574 (SLRHYYFTV). Residues 1575-1596 (GWNIFDFVVVILSIVGMFLAEM) form a helical membrane-spanning segment. Residues 1597-1605 (IEKYFVSPT) are Extracellular-facing. Residues 1606-1625 (LFRVIRLARIGRILRLIKGA) traverse the membrane as a helical segment. The Cytoplasmic portion of the chain corresponds to 1626–1638 (KGIRTLLFALMMS). A helical membrane pass occupies residues 1639–1661 (LPALFNIGLLLFLVMFIYAIFGM). Residues 1662–1684 (SNFAYVKKEAGINDMFNFETFGN) are Extracellular-facing. The segment at residues 1685 to 1697 (SMICLFQITTSAG) is an intramembrane region (pore-forming). Residues 1698-1731 (WDGLLAPILNSAPPDCDPKKVHPGSSVEGDCGNP) lie on the Extracellular side of the membrane. The cysteines at positions 1713 and 1728 are disulfide-linked. The chain crosses the membrane as a helical span at residues 1732-1757 (SVGIFYFVSYIIISFLVVVNMYIAVI). Topologically, residues 1758 to 1984 (LENFSVATEE…EDKEKDESRK (227 aa)) are cytoplasmic. The IQ domain maps to 1887–1916 (EEVSATIIQRAYRRYRLRQHVKNISSIYIK). Residues 1916–1930 (KDGDRDDDLPNKEDT) show a composition bias toward basic and acidic residues. Residues 1916-1984 (KDGDRDDDLP…EDKEKDESRK (69 aa)) are disordered. Over residues 1946–1958 (VTASTISPPSYDS) the composition is skewed to polar residues. Residues 1960–1984 (TKPDQEKYETDKTEKEDKEKDESRK) are compositionally biased toward basic and acidic residues.

Belongs to the sodium channel (TC 1.A.1.10) family. Nav1.7/SCN9A subfamily. The Nav1.7 voltage-gated sodium channel consists of an ion-conducting alpha subunit SCN9A which is functional on its own regulated by one or more beta-1 (SCN1B), beta-2 (SCN2B), beta-3 (SCN3B) and beta-4 (SCN4B) subunits. SCN1B and SCN3B are non-covalently associated with SCN9A. SCN2B and SCN4B are disulfide-linked to SCN9A. SCN1B regulates channel inactivation. Interacts with NEDD4 and NEDD4L; regulates Nav1.7 activity most probably through ubiquitination and subsequent endocytosis. Interacts with TMEM233; modulates the gating properties of NaV1.7. Post-translationally, phosphorylation at Ser-1488 by PKC in a highly conserved cytoplasmic loop increases peak sodium currents. In terms of processing, ubiquitinated by NEDD4L; which may promote its endocytosis. Does not seem to be ubiquitinated by NEDD4. Ubiquitinated by NEDD4L; which may promote its endocytosis. As to expression, expressed at high level in the dorsal root ganglion and at much lower levels in the brain, sciatic nerve, nodose ganglia, heart, thyroid and adrenal glands and Schwann cells, but not in the cardiac and skeletal muscles, brain and liver.

Its subcellular location is the cell membrane. The protein localises to the cell projection. It is found in the neuron projection. It localises to the axon. It catalyses the reaction Na(+)(in) = Na(+)(out). With respect to regulation, inhibited by the conotoxin GVIIJ. Its function is as follows. Pore-forming subunit of Nav1.7, a voltage-gated sodium (Nav) channel that directly mediates the depolarizing phase of action potentials in excitable membranes. Navs, also called VGSCs (voltage-gated sodium channels) or VDSCs (voltage-dependent sodium channels), operate by switching between closed and open conformations depending on the voltage difference across the membrane. In the open conformation they allow Na(+) ions to selectively pass through the pore, along their electrochemical gradient. The influx of Na(+) ions provokes membrane depolarization, initiating the propagation of electrical signals throughout cells and tissues. Nav1.7 plays a crucial role in controlling the excitability and action potential propagation from nociceptor neurons, thereby contributing to the sensory perception of pain. This is Sodium channel protein type 9 subunit alpha from Rattus norvegicus (Rat).